The primary structure comprises 669 residues: Translation factor GUF1, mitochondrial (669 aa).

The transit peptide at 1–49 (MWTLVGRGWGCARALAPRATGAALLVAPGPRSAPTLGAAPESWATDRLY) directs the protein to the mitochondrion. The region spanning 66–247 (ENIRNFSIVA…AIIERIPPPK (182 aa)) is the tr-type G domain. GTP is bound by residues 75 to 82 (AHVDHGKS), 140 to 144 (DTPGH), and 194 to 197 (NKID).

Belongs to the TRAFAC class translation factor GTPase superfamily. Classic translation factor GTPase family. LepA subfamily.

The protein resides in the mitochondrion inner membrane. The enzyme catalyses GTP + H2O = GDP + phosphate + H(+). Promotes mitochondrial protein synthesis. May act as a fidelity factor of the translation reaction, by catalyzing a one-codon backward translocation of tRNAs on improperly translocated ribosomes. Binds to mitochondrial ribosomes in a GTP-dependent manner. In Homo sapiens (Human), this protein is Translation factor GUF1, mitochondrial.